The following is a 584-amino-acid chain: Arginine--tRNA ligase (584 aa).

Positions 125-135 (PNIAKEMHVGH) match the 'HIGH' region motif.

The protein belongs to the class-I aminoacyl-tRNA synthetase family. As to quaternary structure, monomer.

It localises to the cytoplasm. The catalysed reaction is tRNA(Arg) + L-arginine + ATP = L-arginyl-tRNA(Arg) + AMP + diphosphate. The polypeptide is Arginine--tRNA ligase (Thermosynechococcus vestitus (strain NIES-2133 / IAM M-273 / BP-1)).